The following is a 190-amino-acid chain: Protein GrpE (190 aa).

The segment covering 1 to 10 has biased composition (basic and acidic residues); the sequence is MKKHVTEEQK. Residues 1–42 form a disordered region; it reads MKKHVTEEQKTSAAPEAEQASPESSAAEAATPEERISRLEEQ. Residues 12–30 show a composition bias toward low complexity; that stretch reads SAAPEAEQASPESSAAEAA. The segment covering 32–42 has biased composition (basic and acidic residues); the sequence is PEERISRLEEQ.

Belongs to the GrpE family. As to quaternary structure, homodimer.

The protein resides in the cytoplasm. Functionally, participates actively in the response to hyperosmotic and heat shock by preventing the aggregation of stress-denatured proteins, in association with DnaK and GrpE. It is the nucleotide exchange factor for DnaK and may function as a thermosensor. Unfolded proteins bind initially to DnaJ; upon interaction with the DnaJ-bound protein, DnaK hydrolyzes its bound ATP, resulting in the formation of a stable complex. GrpE releases ADP from DnaK; ATP binding to DnaK triggers the release of the substrate protein, thus completing the reaction cycle. Several rounds of ATP-dependent interactions between DnaJ, DnaK and GrpE are required for fully efficient folding. The protein is Protein GrpE of Pelobacter propionicus (strain DSM 2379 / NBRC 103807 / OttBd1).